We begin with the raw amino-acid sequence, 910 residues long: Eukaryotic translation initiation factor 3 subunit C (910 aa).

Residues 1-21 (MSRFFANGSDSESESSEDEIQ) form a disordered region. Over residues 11 to 20 (SESESSEDEI) the composition is skewed to acidic residues. Phosphoserine occurs at positions 34, 165, 176, and 185. Residues 157-281 (FREAPDQESE…KRAEDDEDGE (125 aa)) are disordered. The segment covering 162–186 (DQESEAEDEVVAQESDGGDAGDDSD) has biased composition (acidic residues). Residues 193-207 (EAAPKAVKSAPAKAA) are compositionally biased toward low complexity. Residues 209–235 (ADDDDSDDSIDWDSDSESETESSDDEN) show a composition bias toward acidic residues. Residues 240–268 (MRERFLKRTTEKEEKDDDKRKDKRKEQKV) are compositionally biased toward basic and acidic residues. Residues 639-815 (FHMHINLELL…ETVVMHRSEP (177 aa)) form the PCI domain. The disordered stretch occupies residues 847 to 910 (FFQRGNMGNR…QQQVQTIDEE (64 aa)). Over residues 862–874 (NRNQNNQGGNWLG) the composition is skewed to low complexity. The segment covering 882 to 891 (RNRNQRGHHK) has biased composition (basic residues). Low complexity predominate over residues 895–910 (DRQQQQQQQVQTIDEE).

It belongs to the eIF-3 subunit C family. Component of the eukaryotic translation initiation factor 3 (eIF-3) complex. The eIF-3 complex interacts with pix.

The protein resides in the cytoplasm. Its function is as follows. Component of the eukaryotic translation initiation factor 3 (eIF-3) complex, which is involved in protein synthesis of a specialized repertoire of mRNAs and, together with other initiation factors, stimulates binding of mRNA and methionyl-tRNAi to the 40S ribosome. The eIF-3 complex specifically targets and initiates translation of a subset of mRNAs involved in cell proliferation. This Drosophila yakuba (Fruit fly) protein is Eukaryotic translation initiation factor 3 subunit C.